We begin with the raw amino-acid sequence, 309 residues long: Malate dehydrogenase (309 aa).

NAD(+)-binding positions include 9 to 14 (GAGFVG) and D33. Residues R82 and R88 each coordinate substrate. NAD(+) contacts are provided by residues N95 and 118–120 (VNN). Positions 120 and 151 each coordinate substrate. H175 acts as the Proton acceptor in catalysis.

It belongs to the LDH/MDH superfamily. MDH type 3 family.

The catalysed reaction is (S)-malate + NAD(+) = oxaloacetate + NADH + H(+). In terms of biological role, catalyzes the reversible oxidation of malate to oxaloacetate. The protein is Malate dehydrogenase of Roseiflexus sp. (strain RS-1).